The sequence spans 213 residues: Pyrrolidone-carboxylate peptidase (213 aa).

Active-site residues include Glu-80, Cys-143, and His-166.

Belongs to the peptidase C15 family. As to quaternary structure, homotetramer.

It is found in the cytoplasm. The enzyme catalyses Release of an N-terminal pyroglutamyl group from a polypeptide, the second amino acid generally not being Pro.. In terms of biological role, removes 5-oxoproline from various penultimate amino acid residues except L-proline. In Clavibacter michiganensis subsp. michiganensis (strain NCPPB 382), this protein is Pyrrolidone-carboxylate peptidase.